Consider the following 71-residue polypeptide: Small ribosomal subunit protein bS21 (71 aa).

Positions 38–71 are disordered; the sequence is YEKPTTERKRARASAIKRHAKKLARENARRTRLY. Positions 46–59 are enriched in basic residues; it reads KRARASAIKRHAKK. Over residues 60–71 the composition is skewed to basic and acidic residues; that stretch reads LARENARRTRLY.

This sequence belongs to the bacterial ribosomal protein bS21 family.

In Hamiltonella defensa subsp. Acyrthosiphon pisum (strain 5AT), this protein is Small ribosomal subunit protein bS21.